The following is a 216-amino-acid chain: Heart- and neural crest derivatives-expressed protein 1 (216 aa).

3 disordered regions span residues Met1 to His20, Ala53 to Ser109, and Glu165 to Thr203. The span at Ala8–Pro18 shows a compositional bias: basic residues. Residues Thr65 to Pro78 show a composition bias toward low complexity. Over residues Leu92–Arg104 the composition is skewed to basic residues. One can recognise a bHLH domain in the interval Lys94 to Leu146. A Phosphothreonine; by PLK4 modification is found at Thr107. Position 109 is a phosphoserine; by PLK4 (Ser109). The segment covering Glu165–Glu174 has biased composition (basic and acidic residues).

In terms of assembly, efficient DNA binding requires dimerization with another bHLH protein. Forms homodimers and heterodimers with TCF3 gene products E12 and E47, HAND2 and HEY1, HEY2 and HEYL (hairy-related transcription factors). Interacts with MDFIC. Interacts with SOX15; the interaction enhances HAND1-induced differentiation of trophoblast giant cells. Post-translationally, phosphorylation by PLK4 disrupts the interaction with MDFIC and leads to translocation into the nucleoplasm, allowing dimerization and transcription factor activity. As to expression, smooth muscle cells of the gut and adrenal tissue.

It is found in the nucleus. The protein localises to the nucleoplasm. Its subcellular location is the nucleolus. Functionally, transcription factor that plays an essential role in both trophoblast giant cell differentiation and in cardiac morphogenesis. Binds the DNA sequence 5'-NRTCTG-3' (non-canonical E-box). Acts as a transcriptional repressor of SOX15. In the adult, could be required for ongoing expression of cardiac-specific genes. This Mus musculus (Mouse) protein is Heart- and neural crest derivatives-expressed protein 1 (Hand1).